Reading from the N-terminus, the 154-residue chain is Protein-export protein SecB (154 aa).

Belongs to the SecB family. In terms of assembly, homotetramer, a dimer of dimers. One homotetramer interacts with 1 SecA dimer.

It is found in the cytoplasm. Its function is as follows. One of the proteins required for the normal export of preproteins out of the cell cytoplasm. It is a molecular chaperone that binds to a subset of precursor proteins, maintaining them in a translocation-competent state. It also specifically binds to its receptor SecA. This Blochmanniella pennsylvanica (strain BPEN) protein is Protein-export protein SecB.